A 435-amino-acid polypeptide reads, in one-letter code: Methylenetetrahydrofolate--tRNA-(uracil-5-)-methyltransferase TrmFO (435 aa).

FAD is bound at residue 9-14 (GGGLAG).

This sequence belongs to the MnmG family. TrmFO subfamily. FAD is required as a cofactor.

The protein resides in the cytoplasm. The enzyme catalyses uridine(54) in tRNA + (6R)-5,10-methylene-5,6,7,8-tetrahydrofolate + NADH + H(+) = 5-methyluridine(54) in tRNA + (6S)-5,6,7,8-tetrahydrofolate + NAD(+). It catalyses the reaction uridine(54) in tRNA + (6R)-5,10-methylene-5,6,7,8-tetrahydrofolate + NADPH + H(+) = 5-methyluridine(54) in tRNA + (6S)-5,6,7,8-tetrahydrofolate + NADP(+). In terms of biological role, catalyzes the folate-dependent formation of 5-methyl-uridine at position 54 (M-5-U54) in all tRNAs. In Citrifermentans bemidjiense (strain ATCC BAA-1014 / DSM 16622 / JCM 12645 / Bem) (Geobacter bemidjiensis), this protein is Methylenetetrahydrofolate--tRNA-(uracil-5-)-methyltransferase TrmFO.